The sequence spans 340 residues: NADH-quinone oxidoreductase subunit H (340 aa).

The next 8 membrane-spanning stretches (helical) occupy residues 4-24 (TIGI…PLLI), 78-98 (YLFV…WAVI), 113-133 (VLYL…AGWA), 151-171 (VSYE…AGSM), 184-204 (MLHW…IAGI), 244-264 (SMIL…LSPF), 273-293 (IFFV…FLFV), and 316-336 (VLIP…VAHV).

This sequence belongs to the complex I subunit 1 family. NDH-1 is composed of 14 different subunits. Subunits NuoA, H, J, K, L, M, N constitute the membrane sector of the complex.

The protein resides in the cell inner membrane. The enzyme catalyses a quinone + NADH + 5 H(+)(in) = a quinol + NAD(+) + 4 H(+)(out). Functionally, NDH-1 shuttles electrons from NADH, via FMN and iron-sulfur (Fe-S) centers, to quinones in the respiratory chain. The immediate electron acceptor for the enzyme in this species is believed to be ubiquinone. Couples the redox reaction to proton translocation (for every two electrons transferred, four hydrogen ions are translocated across the cytoplasmic membrane), and thus conserves the redox energy in a proton gradient. This subunit may bind ubiquinone. This is NADH-quinone oxidoreductase subunit H from Legionella pneumophila (strain Corby).